Here is a 277-residue protein sequence, read N- to C-terminus: Cell division protein ZipA (277 aa).

Residues 1 to 5 are Periplasmic-facing; that stretch reads MQDLR. The helical transmembrane segment at 6–26 threads the bilayer; it reads LMLLLFGVITIIVLFLHGVWA. The Cytoplasmic portion of the chain corresponds to 27-277; sequence RRKERSALFY…NALIRSTPHL (251 aa). The interval 120–139 is disordered; sequence QKKSDDLSHQSKETHHPSIQ.

This sequence belongs to the ZipA family. As to quaternary structure, interacts with FtsZ via their C-terminal domains.

The protein resides in the cell inner membrane. In terms of biological role, essential cell division protein that stabilizes the FtsZ protofilaments by cross-linking them and that serves as a cytoplasmic membrane anchor for the Z ring. Also required for the recruitment to the septal ring of downstream cell division proteins. The chain is Cell division protein ZipA from Hamiltonella defensa subsp. Acyrthosiphon pisum (strain 5AT).